Here is a 132-residue protein sequence, read N- to C-terminus: Small ribosomal subunit protein uS8 (132 aa).

This sequence belongs to the universal ribosomal protein uS8 family. As to quaternary structure, part of the 30S ribosomal subunit. Contacts proteins S5 and S12.

Functionally, one of the primary rRNA binding proteins, it binds directly to 16S rRNA central domain where it helps coordinate assembly of the platform of the 30S subunit. This is Small ribosomal subunit protein uS8 from Lactococcus lactis subsp. cremoris (strain MG1363).